The primary structure comprises 288 residues: MIKFEKVNYTYQPNSPFASRALFDIDLEVKKGSYTALIGHTGSGKSTLLQHLNGLLQPTQGTVRVGDIVVTSTSKQKEIKPVRKKVGVVFQFPESQLFEETVLKDVAFGPQNFGISKEEAEKIAAEKLEMVGLSKEFWEKSPFELSGGQMRRVAIAGILAMEPEVLVLDEPTAGLDPKARIEMMKLFESIHQTGQTVVLVTHLMDDVADYADYVYLLEKGHIISCGTPSDVFQEVDFLKAHELGVPKATHFADQLQKTGVYTFEKLPITRAELVNLLTSLSVKSGGEN.

The region spanning 2–244 (IKFEKVNYTY…VDFLKAHELG (243 aa)) is the ABC transporter domain. An ATP-binding site is contributed by 39 to 46 (GHTGSGKS).

It belongs to the ABC transporter superfamily. Energy-coupling factor EcfA family. In terms of assembly, forms a stable energy-coupling factor (ECF) transporter complex composed of 2 membrane-embedded substrate-binding proteins (S component), 2 ATP-binding proteins (A component) and 2 transmembrane proteins (T component).

It localises to the cell membrane. ATP-binding (A) component of a common energy-coupling factor (ECF) ABC-transporter complex. Unlike classic ABC transporters this ECF transporter provides the energy necessary to transport a number of different substrates. The protein is Energy-coupling factor transporter ATP-binding protein EcfA2 of Lactococcus lactis subsp. lactis (strain IL1403) (Streptococcus lactis).